The primary structure comprises 139 residues: UPF0225 protein Bpro_4182 (139 aa).

Belongs to the UPF0225 family.

The protein is UPF0225 protein Bpro_4182 of Polaromonas sp. (strain JS666 / ATCC BAA-500).